Consider the following 362-residue polypeptide: DNA replication and repair protein RecF (362 aa).

Position 31-38 (31-38 (GDNAAGKT)) interacts with ATP.

Belongs to the RecF family.

It localises to the cytoplasm. Its function is as follows. The RecF protein is involved in DNA metabolism; it is required for DNA replication and normal SOS inducibility. RecF binds preferentially to single-stranded, linear DNA. It also seems to bind ATP. This chain is DNA replication and repair protein RecF, found in Hydrogenovibrio crunogenus (strain DSM 25203 / XCL-2) (Thiomicrospira crunogena).